The chain runs to 790 residues: Cadherin-18 (790 aa).

An N-terminal signal peptide occupies residues 1 to 24 (MKITSTSCICPVLVCLCFVQRCYG). The propeptide occupies 25–53 (TAHHSSIKVMRNQTKHIEGETEVHHRPKR). Residue Asn36 is glycosylated (N-linked (GlcNAc...) asparagine). Cadherin domains follow at residues 54–159 (GWVW…APKF), 160–268 (TDGP…PPRF), 269–383 (PQKH…PPLF), 384–486 (SMPS…DNPP), and 487–608 (ELAR…FLSS). Residues 54–608 (GWVWNQFFVL…TCHAEAFLSS (555 aa)) are Extracellular-facing. An N-linked (GlcNAc...) asparagine glycan is attached at Asn255. N-linked (GlcNAc...) asparagine glycosylation is found at Asn455 and Asn536. A helical transmembrane segment spans residues 609–636 (AGLSTGALIAILLCVLILLAIVVLFITL). Residues 637 to 790 (RRSKKEPLII…YGEIESERTT (154 aa)) are Cytoplasmic-facing. A Phosphoserine modification is found at Ser786.

It is found in the cell membrane. Cadherins are calcium-dependent cell adhesion proteins. They preferentially interact with themselves in a homophilic manner in connecting cells; cadherins may thus contribute to the sorting of heterogeneous cell types. This is Cadherin-18 (CDH18) from Homo sapiens (Human).